The sequence spans 225 residues: Ribonuclease 3 (225 aa).

In terms of domain architecture, RNase III spans 5 to 127; it reads IDKLERKLGY…IIGAIYLDSD (123 aa). Position 40 (glutamate 40) interacts with Mg(2+). Aspartate 44 is a catalytic residue. Mg(2+) is bound by residues aspartate 113 and glutamate 116. Residue glutamate 116 is part of the active site. The DRBM domain maps to 154 to 224; sequence DPKTRLQEFL…AETALEQLTN (71 aa).

Belongs to the ribonuclease III family. Homodimer. Mg(2+) is required as a cofactor.

It is found in the cytoplasm. The enzyme catalyses Endonucleolytic cleavage to 5'-phosphomonoester.. Digests double-stranded RNA. Involved in the processing of primary rRNA transcript to yield the immediate precursors to the large and small rRNAs (23S and 16S). Processes some mRNAs, and tRNAs when they are encoded in the rRNA operon. Processes pre-crRNA and tracrRNA of type II CRISPR loci if present in the organism. This is Ribonuclease 3 from Vibrio campbellii (strain ATCC BAA-1116).